Here is a 249-residue protein sequence, read N- to C-terminus: Glucosamine-6-phosphate deaminase 2 (249 aa).

The Proton acceptor; for enolization step role is filled by aspartate 67. Asparagine 136 acts as the For ring-opening step in catalysis. Histidine 138 serves as the catalytic Proton acceptor; for ring-opening step. The active-site For ring-opening step is glutamate 143.

This sequence belongs to the glucosamine/galactosamine-6-phosphate isomerase family. NagB subfamily.

It catalyses the reaction alpha-D-glucosamine 6-phosphate + H2O = beta-D-fructose 6-phosphate + NH4(+). It participates in amino-sugar metabolism; N-acetylneuraminate degradation; D-fructose 6-phosphate from N-acetylneuraminate: step 5/5. Catalyzes the reversible isomerization-deamination of glucosamine 6-phosphate (GlcN6P) to form fructose 6-phosphate (Fru6P) and ammonium ion. Required for growth on glucosamine and also provides the majority of GlcN6P deaminase activity during growth on N-acetylglucosamine (GlcNAc). The protein is Glucosamine-6-phosphate deaminase 2 of Bacillus subtilis (strain 168).